The chain runs to 131 residues: Large ribosomal subunit protein bL17 (131 aa).

The protein belongs to the bacterial ribosomal protein bL17 family. In terms of assembly, part of the 50S ribosomal subunit. Contacts protein L32.

This Shewanella amazonensis (strain ATCC BAA-1098 / SB2B) protein is Large ribosomal subunit protein bL17.